The chain runs to 182 residues: MADHLMLAEGYCLLQVPPHTHGPHAPRTLQPYAGPGMDSGLRPRGAPLGPPPPPGTLAYGSFGSPVSFQPFPVSQSPGAGSTHLQSAATPSPGRIPAPPAAAGGPSPLQPAPGAAASLPPPPPPPALGCMDTELIDEEALTSLELELGLHRVRELPELFLGQSEFDCFSDLGSAPAAGSVSC.

The tract at residues 22 to 129 (GPHAPRTLQP…PPPPPPALGC (108 aa)) is disordered. Positions 64-89 (SPVSFQPFPVSQSPGAGSTHLQSAAT) are enriched in polar residues. Positions 100–117 (AAAGGPSPLQPAPGAAAS) are enriched in low complexity.

This sequence belongs to the CITED family. As to quaternary structure, interacts via its C-terminal region with the CH1 domain of CREBBP and EP300. Interacts with all TFAP2/AP-2 isoforms. Strongly expressed in heart, spleen and testis, and weakly in liver and kidney.

Its subcellular location is the nucleus. It localises to the cytoplasm. Its function is as follows. Acts as a transcriptional coactivator for TFAP2/AP-2. Enhances estrogen-dependent transactivation mediated by estrogen receptors. May function as an inhibitor of transactivation by HIF1A by disrupting HIF1A interaction with CREBBP. May be involved in regulation of gene expression during development and differentiation of blood cells, endothelial cells and mammary epithelial cells. The polypeptide is Cbp/p300-interacting transactivator 4 (Mus musculus (Mouse)).